A 129-amino-acid chain; its full sequence is Probable tautomerase YrdN (129 aa).

The active-site Proton acceptor; via imino nitrogen is the P2.

It belongs to the 4-oxalocrotonate tautomerase family.

Functionally, putative target of GltR. The polypeptide is Probable tautomerase YrdN (yrdN) (Bacillus subtilis (strain 168)).